A 119-amino-acid polypeptide reads, in one-letter code: Small ribosomal subunit protein bS16 (119 aa).

This sequence belongs to the bacterial ribosomal protein bS16 family.

This is Small ribosomal subunit protein bS16 from Chlamydia felis (strain Fe/C-56) (Chlamydophila felis).